A 1182-amino-acid chain; its full sequence is Protein patched homolog 2 (1182 aa).

Residues 1 to 57 (MVRPLSLGELPPSYTPPARSSAPHILAGSLQAPLWLRAYFQGLLFSLGCRIQKHCGK) are Cytoplasmic-facing. A helical transmembrane segment spans residues 58–78 (VLFLGLVAFGALALGLRVAVI). Residues 79-394 (ETDLEQLWVE…DILRAFSEVS (316 aa)) lie on the Extracellular side of the membrane. Asparagine 370 carries N-linked (GlcNAc...) asparagine glycosylation. In terms of domain architecture, SSD spans 394–552 (STTRVVGGYL…MLVFPAILSL (159 aa)). A helical membrane pass occupies residues 395–414 (TTRVVGGYLLMLAYACVTML). Over 415–428 (RWDCAQSQGAVGLA) the chain is Cytoplasmic. Residues 429–449 (GVLLVALAVASGLGLCALLGI) form a helical membrane-spanning segment. The Extracellular segment spans residues 450–457 (TFNAATTQ). Residues 458–478 (VLPFLALGIGVDDIFLLAHAF) traverse the membrane as a helical segment. The Cytoplasmic portion of the chain corresponds to 479-501 (TKAPPDTPLPERMGECLRSTGTS). A helical membrane pass occupies residues 502–522 (VALTSVNNMVAFFMAALVPIP). The Extracellular portion of the chain corresponds to 523–531 (ALRAFSLQA). A helical transmembrane segment spans residues 532–552 (AIVVGCNFAAVMLVFPAILSL). The Cytoplasmic portion of the chain corresponds to 553-686 (DLRRRHRQRL…APLLLQTRAK (134 aa)). The chain crosses the membrane as a helical span at residues 687–707 (ALVLLFFGALLGLSLYGATLV). The Extracellular portion of the chain corresponds to 708–963 (QDGLALTDVV…WEQYLGLRRC (256 aa)). Asparagine 812 carries an N-linked (GlcNAc...) asparagine glycan. A helical transmembrane segment spans residues 964–984 (FLLAVCILLVCTFLVCALLLL). Over 985–991 (SPWTAGL) the chain is Cytoplasmic. Residues 992-1012 (IVLVLAMMTVELFGIMGFLGI) traverse the membrane as a helical segment. Lysine 1013 is a topological domain (extracellular). Residues 1014 to 1034 (LSAIPVVILVASIGIGVEFTV) traverse the membrane as a helical segment. Topologically, residues 1035–1064 (HVALGFLTSHGSRNLRAASALEQTFAPVTD) are cytoplasmic. Residues 1065–1085 (GAVSTLLGLLMLAGSNFDFII) traverse the membrane as a helical segment. Position 1086 (arginine 1086) is a topological domain, extracellular. Residues 1087 to 1107 (YFFVVLTVLTLLGLLHGLLLL) traverse the membrane as a helical segment. Residues 1108–1182 (PVLLSILGPP…YVHPASEEPT (75 aa)) lie on the Cytoplasmic side of the membrane.

This sequence belongs to the patched family. In terms of tissue distribution, expressed in epithelial cells of the developing hair, tooth and whisker.

It is found in the membrane. Functionally, plays a role in the control of cellular growth. May have a role in epidermal development. May act as a receptor for Sonic hedgehog (SHH). The polypeptide is Protein patched homolog 2 (Ptch2) (Mus musculus (Mouse)).